The chain runs to 512 residues: MGRILDISGQPFDFDDEMQSRSDELAMVMKRTQEHPSSGVTPNRAAQMLRDAERGDLTAQADLAFDMEEKDTHLFSELSKRRLAIQALEWRIAPARDASAQEKKDADMLNEYLHDAAWFEDALFDAGDAILKGYSMQEIEWGWLGKMRVPVALHHRDPALFCANPDNLNELRLRDASYHGLELQPFGWFMHRAKSRTGYVGTNGLVRTLIWPFIFKNYSVRDFAEFLEIYGLPMRVGKYPTGSTNREKATLMQAVMDIGRRAGGIIPMGMTLDFQSAADGQSDPFMAMIGWAEKAISKAILGGTLTTEAGDKGARSLGEVHDEVRREIRNADVGQLARSINRDLIYPLLALNSDSTIDINRLPGIVFDTSEAGDITALSDAIPKLAAGMRIPVSWIQEKLHIPQPVGDEAVFTIQPVVPDNGSQKEAALSAEDIPQEDDIDRMGVSPEDWQRSVDPLLKPVIFSVLKDGPEAAMNKAASLYPQMDDAELIDMLTRAIFVADIWGRLDAAADH.

As to quaternary structure, homododecamer. Part of the immature prohead complex. Might interact with viral I protease; this interaction gives rise to an early 25S initiator complex. The scaffolding protein Z and the capsid protein T should then be added to this initiator complex to yield the immature prohead. Host GroEL and GroES are also essential for the correct assembly of viral head and tail. Post-translationally, cleavage by the viral I protease yields a C-terminally cleaved portal protein competent for DNA packaging and procpasid maturation.

Its subcellular location is the virion. It is found in the host cytoplasm. In terms of biological role, forms the portal vertex of the capsid. This portal plays critical roles in head assembly, genome packaging, neck/tail attachment, and genome ejection. The portal protein multimerizes as a single ring-shaped homododecamer arranged around a central channel. Binds to the terminase subunits to form the packaging machine. Acts as a linker between the capsid and tail. Required for attachment of the neck proteins to the capsid. In Escherichia phage Mu (Bacteriophage Mu), this protein is Portal protein (H).